Consider the following 65-residue polypeptide: Large ribosomal subunit protein uL29 (65 aa).

Belongs to the universal ribosomal protein uL29 family.

This is Large ribosomal subunit protein uL29 from Coxiella burnetii (strain CbuK_Q154) (Coxiella burnetii (strain Q154)).